Reading from the N-terminus, the 940-residue chain is Lysine-specific demethylase 7A (940 aa).

The PHD-type zinc finger occupies 37–88 (PVYCVCRQPYDVNRFMIECDVCKDWFHGSCVGVEEHHAVDIDLYHCPDCAAL). The linker stretch occupies residues 97-114 (RRNWHRHDYTEVDDGSKP). Residues 230–386 (FSDTKMSELV…MQLRCYEMEK (157 aa)) enclose the JmjC domain. Threonine 279 contributes to the substrate binding site. Fe cation-binding residues include histidine 282 and aspartate 284. Residue lysine 299 coordinates substrate. Residue histidine 354 participates in Fe cation binding. Disordered stretches follow at residues 483-509 (VKSQ…HSRR), 599-670 (LYTA…PDCT), 710-729 (SQKP…TSTS), 818-854 (NAQD…SSSI), and 876-920 (SPER…MATA). Phosphoserine is present on serine 604. The segment covering 613 to 623 (TQNANMKTEQS) has biased composition (polar residues). The span at 714–724 (SRQEIPVKREC) shows a compositional bias: basic and acidic residues.

This sequence belongs to the JHDM1 histone demethylase family. JHDM1D subfamily. Requires Fe(2+) as cofactor.

The protein localises to the nucleus. It carries out the reaction N(6),N(6)-dimethyl-L-lysyl(9)-[histone H3] + 2 2-oxoglutarate + 2 O2 = L-lysyl(9)-[histone H3] + 2 formaldehyde + 2 succinate + 2 CO2. The enzyme catalyses N(6),N(6)-dimethyl-L-lysyl(27)-[histone H3] + 2 2-oxoglutarate + 2 O2 = L-lysyl(27)-[histone H3] + 2 formaldehyde + 2 succinate + 2 CO2. It catalyses the reaction N(6),N(6)-dimethyl-L-lysyl(36)-[histone H3] + 2-oxoglutarate + O2 = N(6)-methyl-L-lysyl(36)-[histone H3] + formaldehyde + succinate + CO2. The catalysed reaction is N(6)-methyl-L-lysyl(20)-[histone H4] + 2-oxoglutarate + O2 = L-lysyl(20)-[histone H4] + formaldehyde + succinate + CO2. Functionally, histone demethylase required for brain development. Specifically demethylates dimethylated 'Lys-9', 'Lys-27' and 'Lys-36' (H3K9me2, H3K27me2, H3K36me2, respectively) of histone H3 and monomethylated histone H4 'Lys-20' residue (H4K20Me1), thereby playing a central role in histone code. Specifically binds trimethylated 'Lys-4' of histone H3 (H3K4me3), affecting histone demethylase specificity: in presence of H3K4me3, it has no demethylase activity toward H3K9me2, while it has high activity toward H3K27me2. Demethylates H3K9me2 in absence of H3K4me3. Has activity toward H4K20Me1 only when nucleosome is used as a substrate and when not histone octamer is used as substrate. The protein is Lysine-specific demethylase 7A (Kdm7a) of Mus musculus (Mouse).